Consider the following 272-residue polypeptide: Glutamate racemase (272 aa).

Substrate-binding positions include 12–13 and 44–45; these read DS and YG. Cys-75 functions as the Proton donor/acceptor in the catalytic mechanism. Residue 76–77 participates in substrate binding; sequence NT. The active-site Proton donor/acceptor is the Cys-185. A substrate-binding site is contributed by 186-187; the sequence is TH.

This sequence belongs to the aspartate/glutamate racemases family.

It catalyses the reaction L-glutamate = D-glutamate. The protein operates within cell wall biogenesis; peptidoglycan biosynthesis. Provides the (R)-glutamate required for cell wall biosynthesis. The chain is Glutamate racemase from Mycobacterium leprae (strain TN).